A 150-amino-acid polypeptide reads, in one-letter code: uncharacterized protein (150 aa).

The N-acetyltransferase domain occupies 4–149; it reads IQIRNYQPGD…TNFYMRYKPQ (146 aa).

Belongs to the acetyltransferase family.

This is an uncharacterized protein from Escherichia coli (strain K12).